The sequence spans 160 residues: Transcription elongation factor GreA (160 aa).

A coiled-coil region spans residues 1 to 72 (MAEKTYVMTL…QIQILETKIR (72 aa)).

It belongs to the GreA/GreB family.

In terms of biological role, necessary for efficient RNA polymerase transcription elongation past template-encoded arresting sites. The arresting sites in DNA have the property of trapping a certain fraction of elongating RNA polymerases that pass through, resulting in locked ternary complexes. Cleavage of the nascent transcript by cleavage factors such as GreA or GreB allows the resumption of elongation from the new 3'terminus. GreA releases sequences of 2 to 3 nucleotides. This is Transcription elongation factor GreA from Streptococcus thermophilus (strain ATCC BAA-491 / LMD-9).